The chain runs to 448 residues: Probable glycine dehydrogenase (decarboxylating) subunit 1 (448 aa).

The protein belongs to the GcvP family. N-terminal subunit subfamily. As to quaternary structure, the glycine cleavage system is composed of four proteins: P, T, L and H. In this organism, the P 'protein' is a heterodimer of two subunits.

It catalyses the reaction N(6)-[(R)-lipoyl]-L-lysyl-[glycine-cleavage complex H protein] + glycine + H(+) = N(6)-[(R)-S(8)-aminomethyldihydrolipoyl]-L-lysyl-[glycine-cleavage complex H protein] + CO2. In terms of biological role, the glycine cleavage system catalyzes the degradation of glycine. The P protein binds the alpha-amino group of glycine through its pyridoxal phosphate cofactor; CO(2) is released and the remaining methylamine moiety is then transferred to the lipoamide cofactor of the H protein. This is Probable glycine dehydrogenase (decarboxylating) subunit 1 from Staphylococcus aureus (strain Mu3 / ATCC 700698).